Reading from the N-terminus, the 422-residue chain is UDP-N-acetylglucosamine 1-carboxyvinyltransferase (422 aa).

Residue 22–23 participates in phosphoenolpyruvate binding; the sequence is KN. Residue R92 participates in UDP-N-acetyl-alpha-D-glucosamine binding. C116 serves as the catalytic Proton donor. C116 is subject to 2-(S-cysteinyl)pyruvic acid O-phosphothioketal. Residues 121-125, D305, and I327 contribute to the UDP-N-acetyl-alpha-D-glucosamine site; that span reads RPVDQ.

This sequence belongs to the EPSP synthase family. MurA subfamily.

The protein resides in the cytoplasm. The catalysed reaction is phosphoenolpyruvate + UDP-N-acetyl-alpha-D-glucosamine = UDP-N-acetyl-3-O-(1-carboxyvinyl)-alpha-D-glucosamine + phosphate. It participates in cell wall biogenesis; peptidoglycan biosynthesis. Cell wall formation. Adds enolpyruvyl to UDP-N-acetylglucosamine. This Sorangium cellulosum (strain So ce56) (Polyangium cellulosum (strain So ce56)) protein is UDP-N-acetylglucosamine 1-carboxyvinyltransferase.